We begin with the raw amino-acid sequence, 252 residues long: tRNA (guanine-N(7)-)-methyltransferase (252 aa).

S-adenosyl-L-methionine is bound by residues E51, D76, N103, and D125. D125 is a catalytic residue. Residues K129, D159, and 199-202 each bind substrate; that span reads TYYE.

Belongs to the class I-like SAM-binding methyltransferase superfamily. TrmB family.

It carries out the reaction guanosine(46) in tRNA + S-adenosyl-L-methionine = N(7)-methylguanosine(46) in tRNA + S-adenosyl-L-homocysteine. It participates in tRNA modification; N(7)-methylguanine-tRNA biosynthesis. Functionally, catalyzes the formation of N(7)-methylguanine at position 46 (m7G46) in tRNA. The chain is tRNA (guanine-N(7)-)-methyltransferase from Bacteroides thetaiotaomicron (strain ATCC 29148 / DSM 2079 / JCM 5827 / CCUG 10774 / NCTC 10582 / VPI-5482 / E50).